The chain runs to 65 residues: UPF0291 protein BBR47_33060 (65 aa).

It belongs to the UPF0291 family.

It is found in the cytoplasm. This is UPF0291 protein BBR47_33060 from Brevibacillus brevis (strain 47 / JCM 6285 / NBRC 100599).